Reading from the N-terminus, the 465-residue chain is UDP-glycosyltransferase 89A2 (465 aa).

UDP-alpha-D-glucose is bound by residues serine 291, 342-344, 359-367, and 381-384; these read VSQ, HCGWNSVLE, and EADQ.

Belongs to the UDP-glycosyltransferase family.

Its function is as follows. Glucosyltransferase that glucosylates benzoates and benzoate derivatives in vitro. The protein is UDP-glycosyltransferase 89A2 (UGT89A2) of Arabidopsis thaliana (Mouse-ear cress).